The chain runs to 151 residues: Aspartate carbamoyltransferase regulatory chain (151 aa).

Zn(2+) is bound by residues Cys108, Cys113, Cys138, and Cys141.

It belongs to the PyrI family. In terms of assembly, contains catalytic and regulatory chains. The cofactor is Zn(2+).

In terms of biological role, involved in allosteric regulation of aspartate carbamoyltransferase. In Pyrobaculum arsenaticum (strain DSM 13514 / JCM 11321 / PZ6), this protein is Aspartate carbamoyltransferase regulatory chain.